Reading from the N-terminus, the 67-residue chain is Minor structural pilin EpdD (67 aa).

A propeptide spanning residues 1–13 (MSVALKKFFSKRG) is cleaved from the precursor. Positions 14–22 (QLSLEFSVL) match the QXSXEXXXL motif.

In terms of processing, the N-terminus is cleaved by the prepilin peptidase EppA, which recognizes the class III signal sequence. N-glycosylated. Glycosylation is AglB-dependent. The N-glycosylation does not occur unless the signal peptide has been cleaved first.

It is found in the secreted. Its subcellular location is the cell surface. The protein localises to the fimbrium. Minor component of the type IV-like pili. Essential for pili formation. This is Minor structural pilin EpdD from Methanococcus maripaludis (strain DSM 14266 / JCM 13030 / NBRC 101832 / S2 / LL).